Here is a 438-residue protein sequence, read N- to C-terminus: Cyanidin-3-O-glucoside 2-O-glucuronosyltransferase (438 aa).

UDP-alpha-D-glucuronate-binding positions include serine 264, 315-316 (WV), 333-341 (HCGWSSTME), and 355-358 (QFDQ).

This sequence belongs to the UDP-glycosyltransferase family. As to quaternary structure, monomer. As to expression, expressed in petals. Not detected in sepals, stems, leaves, tubular corollas and white petals.

The protein localises to the cytoplasm. The enzyme catalyses cyanidin 3-O-beta-D-glucoside + UDP-alpha-D-glucuronate = cyanidin 3-O-(2-O-beta-D-glucuronosyl)-beta-D-glucoside + UDP + H(+). Inhibited by copper, mercury, UDP, UTP and partially by calcium, cadmium, iron and UMP. Not affected by cobalt, magnesium, manganese, zinc, nickel, tin, uridine, sadium malonate and glucose. Functionally, involved in the production of glucuronosylated anthocyanins that are the origin of the red coloration of flowers. Can use cyanidin 3-O-6''-O-malonylglucoside, cyanidin 3-O-glucoside and delphinidin 3-O-glucosideas substrates, but not pelargonidin 3-O-glucoside, cyanidin 3-O-3'',6''-O-dimalonylglucoside, pelargonidin 3,5-O-diglucoside, pelargonidin 3-O-6''-O-malonylglucoside-5-O-glucoside, quercetin 3-O-glucoside, quercetin 3-O-6''-O-malonylglucoside, daidzin, genistin,7-O-6''-O-malonylglucosides of daidzein and genistein, cyanidin, quercetin, daidzein, genistein p-Nitrophenyl beta-D-glucopyranoside, beta-estradiol, 17alpha-estradiol, 1-naphthol, 2-naphthol, 4-methylumbelliferone, and p-nitrophenol. Highly specific for UDP-glucuronate (UDP-GlcUA). Arg-25 is decisive with respect to UDP-sugar specificity. The chain is Cyanidin-3-O-glucoside 2-O-glucuronosyltransferase (UGAT) from Bellis perennis (English daisy).